The sequence spans 235 residues: Small ribosomal subunit protein uS10m (235 aa).

The N-terminal 19 residues, 1-19 (MLRTSVRSPLLYRCLSKRF), are a transit peptide targeting the mitochondrion.

It belongs to the universal ribosomal protein uS10 family. Part of the mitochondrial small ribosomal subunit.

The protein resides in the mitochondrion. Its function is as follows. Involved in mitochondrial genome encoded proteins translation. Involved in the binding of tRNA to the ribosomes. The chain is Small ribosomal subunit protein uS10m (RSM10) from Candida glabrata (strain ATCC 2001 / BCRC 20586 / JCM 3761 / NBRC 0622 / NRRL Y-65 / CBS 138) (Yeast).